A 329-amino-acid chain; its full sequence is Sex comb on midleg-like protein 1 (329 aa).

Phosphoserine occurs at positions 138 and 238. One can recognise an SAM domain in the interval 258-325 (WSVEAVVLFL…YYIDRLKQGK (68 aa)).

The protein belongs to the SCM family.

The protein resides in the nucleus. Its function is as follows. Putative Polycomb group (PcG) protein. PcG proteins act by forming multiprotein complexes, which are required to maintain the transcriptionally repressive state of homeotic genes throughout development. May be involved in spermatogenesis during sexual maturation. The protein is Sex comb on midleg-like protein 1 (SCML1) of Hoolock hoolock (Western hoolock gibbon).